Reading from the N-terminus, the 569-residue chain is MSASCLDLISAPPQPDSDRMDRALNPGRQNSPDTAGELTLLHTAPGGLGMALEEELAMLTGDREDELQESAPETPVSGQDSDLLSLFRQKEKDLVLAAKLGKALLERNQDLTKQYDKMTKDLNDRLELLEQEKHELRRRLESREGEWEGRVAELETDVQHLQGELERHQLQLRDADREKSRAISELSEQNHRLLEQLSRAAEVEKQLSTQVHSLRDDFKEKSISSNQHMTRLETLQAEIRMLSERKQDLERRVCAVLEENQQLQNTVEELRERTLELEKHCHHKDLQKILPETLLTIIKLKTNYSQKKKKTEHLILHTRRAHTHLCRAPSEVQSCMGSLSCVWCIQRRKDCDLFLLQLRLQLWEAYCQVRSICSQLRGNDITDSALSTDSSMDESSETLSAKDVPTGSLHSSLLELRRLTQNLLDGNESTVALLSVEVSSSREENERLRAMTEVHEPNEQLQSAIRDRDEAIAKKKAVEMELAKCKIDIMSLNSBQLLDAIQQKLNLSQQLEAWQDDMHRVIDQQLMDKHQEEWKDPPFSFSRRGAAASRPTQRLADRDKPLFSFFKKN.

Positions 1-36 (MSASCLDLISAPPQPDSDRMDRALNPGRQNSPDTAG) are disordered. Residues 97 to 101 (AAKLG) carry the CC1 box motif. Residues 102-283 (KALLERNQDL…TLELEKHCHH (182 aa)) adopt a coiled-coil conformation. Positions 385–405 (ALSTDSSMDESSETLSAKDVP) are disordered. Positions 458–520 (NEQLQSAIRD…LEAWQDDMHR (63 aa)) form a coiled coil. Positions 533–554 (EWKDPPFSFSRRGAAASRPTQR) are disordered.

This sequence belongs to the BICDR family. As to quaternary structure, part of a tripartite complex with dynein and dynactin, acts an adapter linking the dynein motor complex and dynactin. Highly expressed in developing neural tissues and developing eye.

It is found in the cytoplasm. The protein resides in the cytoskeleton. It localises to the microtubule organizing center. The protein localises to the centrosome. Functionally, acts as an adapter protein linking the dynein motor complex to various cargos and converts dynein from a non-processive to a highly processive motor in the presence of dynactin. Facilitates the interaction between dynein and dynactin and activates dynein processivity (the ability to move along a microtubule for a long distance without falling off the track). Predominantly recruits 2 dyneins, which increases both the force and speed of the microtubule motor. Component of secretory vesicle machinery in developing neurons that acts as a regulator of neurite outgrowth. Regulates the secretory vesicle transport by controlling the accumulation of Rab6-containing secretory vesicles in the pericentrosomal region restricting anterograde secretory transport during the early phase of neuronal differentiation, thereby inhibiting neuritogenesis. The chain is BICD family-like cargo adapter 1 (bicdl1) from Danio rerio (Zebrafish).